The chain runs to 609 residues: D-apionate lactonase (609 aa).

The enzyme catalyses D-apionolactone + H2O = D-apionate + H(+). Its pathway is carbohydrate metabolism. Its function is as follows. Involved in catabolism of D-apiose. Hydrolyzes D-apionolactone to D-apionate. The sequence is that of D-apionate lactonase from Brucella anthropi (strain ATCC 49188 / DSM 6882 / CCUG 24695 / JCM 21032 / LMG 3331 / NBRC 15819 / NCTC 12168 / Alc 37) (Ochrobactrum anthropi).